Here is a 540-residue protein sequence, read N- to C-terminus: Bifunctional ribokinase/ribose-5-phosphate isomerase A (540 aa).

The ribokinase stretch occupies residues 1–308 (MKKIIVVGST…AILNVINQDQ (308 aa)). Substrate is bound by residues 11–13 (NVD), 39–44 (GGKGAN), and Glu-141. ATP contacts are provided by residues Asn-185 and 221–226 (TVGGRG). Asp-247 and Thr-249 together coordinate K(+). 252–253 (GD) is an ATP binding site. Residue Asp-253 coordinates substrate. Asp-253 serves as the catalytic Proton acceptor; for ribokinase activity. Residues Thr-284, Val-287, Gly-289, and Ser-293 each coordinate K(+). The ribose-5-phosphate isomerase A stretch occupies residues 309-540 (MTKTEIEKQK…IKTIKRSDLS (232 aa)). Substrate is bound by residues 339-342 (SGTT), 395-398 (DGAD), and 408-411 (KGGG). The active-site Proton acceptor; for ribose-5-phosphate isomerase activity is Glu-417. Substrate is bound at residue Lys-435.

This sequence in the N-terminal section; belongs to the carbohydrate kinase PfkB family. Ribokinase subfamily. In the C-terminal section; belongs to the ribose 5-phosphate isomerase family. Requires Mg(2+) as cofactor.

Its subcellular location is the cytoplasm. It carries out the reaction D-ribose + ATP = D-ribose 5-phosphate + ADP + H(+). It catalyses the reaction aldehydo-D-ribose 5-phosphate = D-ribulose 5-phosphate. It functions in the pathway carbohydrate metabolism; D-ribose degradation; D-ribose 5-phosphate from beta-D-ribopyranose: step 2/2. The protein operates within carbohydrate degradation; pentose phosphate pathway; D-ribose 5-phosphate from D-ribulose 5-phosphate (non-oxidative stage): step 1/1. With respect to regulation, activated by a monovalent cation that binds near, but not in, the active site. The most likely occupant of the site in vivo is potassium. Also activated by ammonium ion. Ion binding induces a conformational change that may alter substrate affinity. Functionally, bifunctional enzyme that catalyzes the phosphorylation of ribose at O-5 in a reaction requiring ATP and magnesium, and the reversible conversion of ribose 5-phosphate to ribulose 5-phosphate. The protein is Bifunctional ribokinase/ribose-5-phosphate isomerase A (rbsK/rbiA) of Fructilactobacillus sanfranciscensis (strain ATCC 27651 / DSM 20451 / JCM 5668 / CCUG 30143 / KCTC 3205 / NCIMB 702811 / NRRL B-3934 / L-12) (Lactobacillus sanfranciscensis).